The chain runs to 179 residues: Peptide deformylase (179 aa).

Fe cation-binding residues include Cys102 and His144. Glu145 is a catalytic residue. Residue His148 participates in Fe cation binding.

The protein belongs to the polypeptide deformylase family. Requires Fe(2+) as cofactor.

It carries out the reaction N-terminal N-formyl-L-methionyl-[peptide] + H2O = N-terminal L-methionyl-[peptide] + formate. In terms of biological role, removes the formyl group from the N-terminal Met of newly synthesized proteins. Requires at least a dipeptide for an efficient rate of reaction. N-terminal L-methionine is a prerequisite for activity but the enzyme has broad specificity at other positions. The protein is Peptide deformylase of Wolbachia sp. subsp. Brugia malayi (strain TRS).